Reading from the N-terminus, the 217-residue chain is MNQSLLAPFGTAIERVEAGLEALRQGQGVLVVDDEDRENEGDLIFAAESLTNAQMAMLIRECSGIVCLCLPDEKVKALELPPMVENNSSQYGTAFTVSIEAKVGVTTGVSAADRVTTIKAAIADNAKPSDLARPGHVYPLRAQPGGVLTRRGHTEGTIDLMQLAGLKPAGVLCEVTNPDGTMARLPEIIAFGAAHNMPVLTIEDIVVYRKSLLANVG.

Residues 37-38 (RE), D42, 150-154 (RRGHT), and E174 each bind D-ribulose 5-phosphate. E38 contacts Mg(2+). H153 is a Mg(2+) binding site.

The protein belongs to the DHBP synthase family. As to quaternary structure, homodimer. The cofactor is Mg(2+). Requires Mn(2+) as cofactor.

It carries out the reaction D-ribulose 5-phosphate = (2S)-2-hydroxy-3-oxobutyl phosphate + formate + H(+). It participates in cofactor biosynthesis; riboflavin biosynthesis; 2-hydroxy-3-oxobutyl phosphate from D-ribulose 5-phosphate: step 1/1. In terms of biological role, catalyzes the conversion of D-ribulose 5-phosphate to formate and 3,4-dihydroxy-2-butanone 4-phosphate. In Shewanella sp. (strain MR-4), this protein is 3,4-dihydroxy-2-butanone 4-phosphate synthase.